The following is a 424-amino-acid chain: MAKNIQAIRGMKDYLPGETAIWQRIEGTLKNVLGSYGYSEIRLPIVEQTPLFKRAIGEVTDVVEKEMYTFEDRNGDSLTLRPEGTAGCVRAGIEHGLLYNQEQRLWYIGPMFRHERPQKGRYRQFHQLGAEVFGLQGPDIDAELIMLTARWWRALGISEHVSLELNSIGSLEARANYRDALVAFLEQHQETLDEDCKRRMYTNPLRVLDSKNPDVQALLNDAPALGDYLDDDSREHFAGLCKLLDAAGIAYTVNQRLVRGLDYYNRTVFEWVTNSLGSQGTVCAGGRYDGLVEQLGGRATPAVGFAMGLERLVLLVQAVNPEFIASPVVDIYLVAAGAQTQSAAMTLAERLRDEMPGVKLMTNHGGGNFKKQFARADKWDARIALVLGESEVADGTVVVKDLRSGEQTAVAQDSVAAHLRTLLG.

Belongs to the class-II aminoacyl-tRNA synthetase family. In terms of assembly, homodimer.

It localises to the cytoplasm. It carries out the reaction tRNA(His) + L-histidine + ATP = L-histidyl-tRNA(His) + AMP + diphosphate + H(+). This is Histidine--tRNA ligase from Salmonella gallinarum (strain 287/91 / NCTC 13346).